A 308-amino-acid chain; its full sequence is Homeobox protein abdominal-A homolog (308 aa).

A DNA-binding region (homeobox) is located at residues 138–197 (RRRGRQTYTRFQTLELEKEFHFNHYLTRRRRIEIAHALCLTERQIKIWFQNRRMKLKKEL). The span at 207–221 (ARREREEQDKMKNES) shows a compositional bias: basic and acidic residues. Residues 207–277 (ARREREEQDK…SGNLGSHLHH (71 aa)) are disordered. Over residues 223–247 (KSAQQHHSQKQAQQEHTVVGSQQTS) the composition is skewed to low complexity. A compositionally biased stretch (gly residues) spans 248 to 269 (NGGGTGGGTGGSGGAGSGGSSG).

It belongs to the Antp homeobox family.

The protein resides in the nucleus. Functionally, sequence-specific transcription factor which is part of a developmental regulatory system that provides cells with specific positional identities on the anterior-posterior axis. The protein is Homeobox protein abdominal-A homolog of Anopheles gambiae (African malaria mosquito).